The sequence spans 327 residues: Flotillin-like protein FloA (327 aa).

2 helical membrane passes run 8–28 (VLLI…LVPI) and 29–49 (PLWI…LVGM).

This sequence belongs to the flotillin-like FloA family. In terms of assembly, homooligomerizes.

It is found in the cell membrane. Its subcellular location is the membrane raft. In terms of biological role, found in functional membrane microdomains (FMM) that may be equivalent to eukaryotic membrane rafts. FMMs are highly dynamic and increase in number as cells age. Flotillins are thought to be important factors in membrane fluidity. This chain is Flotillin-like protein FloA, found in Exiguobacterium sibiricum (strain DSM 17290 / CCUG 55495 / CIP 109462 / JCM 13490 / 255-15).